The following is a 969-amino-acid chain: Poly(ADP-ribose) glycohydrolase (969 aa).

Disordered regions lie at residues 1–149, 161–341, and 368–400; these read MSAG…QQQT, HAEQ…CQAR, and NNAG…GKRD. The interval 1 to 449 is A-domain; the sequence is MSAGPGWEPC…LPPEKKWLGT (449 aa). Positions 10–16 match the Nuclear localization signal motif; the sequence is CTKRPRW. Polar residues predominate over residues 69–84; that stretch reads NATSFVFKQKTITTWM. The short motif at 77-84 is the PIP-box (PCNA interacting peptide) element; the sequence is QKTITTWM. Positions 87-100 are enriched in basic and acidic residues; the sequence is KGPKTAESESKENN. Polar residues predominate over residues 101–113; it reads NTRIDSMMSSVQK. Residues 116–125 show a composition bias toward basic and acidic residues; the sequence is FYPHKVEKLE. 2 stretches are compositionally biased toward polar residues: residues 128–149 and 179–189; these read PQLN…QQQT and QLSNANIGQSP. At Ser135 the chain carries Phosphoserine. Phosphothreonine is present on Thr137. Residues 190 to 205 are compositionally biased toward basic and acidic residues; that stretch reads HTDDHSDTDHEEDRDN. Ser195 is subject to Phosphoserine. Thr197 is subject to Phosphothreonine. Over residues 226–237 the composition is skewed to polar residues; it reads ARSNCKCSGSRQ. A phosphoserine mark is found at Ser256, Ser259, Ser281, Ser286, Ser293, Ser297, and Ser311. Positions 275–284 are enriched in polar residues; the sequence is KLTGQESSLG. Residues 311–325 are compositionally biased toward acidic residues; it reads SEADEETSPVFDEQD. Polar residues-rich tracts occupy residues 329–339 and 369–387; these read SQTANKLSSCQ and NAGT…SSLN. Lys334 bears the N6-acetyllysine mark. Positions 603–788 are catalytic; sequence QPIPLLKQKM…TEQYSEYTGY (186 aa). 719-720 lines the substrate pocket; it reads IE. Asp730 is an active-site residue. The substrate site is built by Asn733 and Gln747. Residues Glu748 and Glu749 contribute to the active site. Residues Tyr788 and 862–867 each bind substrate; that span reads NWGCGA.

It belongs to the poly(ADP-ribose) glycohydrolase family. As to quaternary structure, interacts with PCNA. Interacts with NUDT5.

The protein resides in the nucleus. The enzyme catalyses [(1''-&gt;2')-ADP-alpha-D-ribose](n) + H2O = [(1''-&gt;2')-ADP-alpha-D-ribose](n-1) + ADP-D-ribose. Its function is as follows. Poly(ADP-ribose) glycohydrolase that degrades poly(ADP-ribose) by hydrolyzing the ribose-ribose bonds present in poly(ADP-ribose). PARG acts both as an endo- and exoglycosidase, releasing poly(ADP-ribose) of different length as well as ADP-ribose monomers. It is however unable to cleave the ester bond between the terminal ADP-ribose and ADP-ribosylated residues, leaving proteins that are mono-ADP-ribosylated. Poly(ADP-ribose) is synthesized after DNA damage is only present transiently and is rapidly degraded by PARG. Required to prevent detrimental accumulation of poly(ADP-ribose) upon prolonged replicative stress, while it is not required for recovery from transient replicative stress. Responsible for the prevalence of mono-ADP-ribosylated proteins in cells, thanks to its ability to degrade poly(ADP-ribose) without cleaving the terminal protein-ribose bond. Required for retinoid acid-dependent gene transactivation, probably by removing poly(ADP-ribose) from histone demethylase KDM4D, allowing chromatin derepression at RAR-dependent gene promoters. Involved in the synthesis of ATP in the nucleus, together with PARP1, NMNAT1 and NUDT5. Nuclear ATP generation is required for extensive chromatin remodeling events that are energy-consuming. The chain is Poly(ADP-ribose) glycohydrolase from Mus musculus (Mouse).